We begin with the raw amino-acid sequence, 447 residues long: Rab GDP dissociation inhibitor alpha (447 aa).

Ser-427 carries the post-translational modification Phosphoserine.

This sequence belongs to the Rab GDI family. In terms of assembly, interacts with RHOH. Interacts with the non-phosphorylated forms of RAB1A, RAB3A, RAB5A, RAB5B, RAB5C, RAB8A, RAB8B, RAB10, RAB12, RAB35, and RAB43. Interacts with RAB3A.

The protein localises to the cytoplasm. The protein resides in the golgi apparatus. It is found in the trans-Golgi network. In terms of biological role, regulates the GDP/GTP exchange reaction of most Rab proteins by inhibiting the dissociation of GDP from them, and the subsequent binding of GTP to them. Promotes the dissociation of GDP-bound Rab proteins from the membrane and inhibits their activation. Promotes the dissociation of RAB1A, RAB3A, RAB5A and RAB10 from membranes. The polypeptide is Rab GDP dissociation inhibitor alpha (GDI1) (Bos taurus (Bovine)).